A 32-amino-acid polypeptide reads, in one-letter code: Kappa-conotoxin SrXIA (32 aa).

4 cysteine pairs are disulfide-bonded: Cys1–Cys15, Cys8–Cys20, Cys14–Cys24, and Cys19–Cys28. 2 positions are modified to 4-carboxyglutamate: Glu9 and Glu10. Pro32 bears the Proline amide mark.

It belongs to the conotoxin I2 superfamily. As to expression, expressed by the venom duct.

Its subcellular location is the secreted. Kappa-conotoxins bind and inhibit voltage-gated potassium channels. This toxin inhibits Kv1.2/KCNA2 and Kv1.6/KCNA6. Produces stiffening of body, limbs and tail when injected intracranially into mice. This chain is Kappa-conotoxin SrXIA, found in Conus spurius (Alphabet cone).